The sequence spans 308 residues: tRNA dimethylallyltransferase (308 aa).

ATP is bound at residue 9-16 (GPTAVGKT). A substrate-binding site is contributed by 11–16 (TAVGKT). Positions 34–37 (DSMQ) are interaction with substrate tRNA.

It belongs to the IPP transferase family. In terms of assembly, monomer. It depends on Mg(2+) as a cofactor.

The enzyme catalyses adenosine(37) in tRNA + dimethylallyl diphosphate = N(6)-dimethylallyladenosine(37) in tRNA + diphosphate. Functionally, catalyzes the transfer of a dimethylallyl group onto the adenine at position 37 in tRNAs that read codons beginning with uridine, leading to the formation of N6-(dimethylallyl)adenosine (i(6)A). This is tRNA dimethylallyltransferase from Lactobacillus delbrueckii subsp. bulgaricus (strain ATCC 11842 / DSM 20081 / BCRC 10696 / JCM 1002 / NBRC 13953 / NCIMB 11778 / NCTC 12712 / WDCM 00102 / Lb 14).